A 600-amino-acid chain; its full sequence is Elongation factor 4 (600 aa).

The tr-type G domain occupies 6–188; it reads QFIRNFSIIA…QITKQIPSPK (183 aa). Residues 18–23 and 135–138 contribute to the GTP site; these read DHGKST and NKID.

This sequence belongs to the TRAFAC class translation factor GTPase superfamily. Classic translation factor GTPase family. LepA subfamily.

The protein localises to the cell inner membrane. It catalyses the reaction GTP + H2O = GDP + phosphate + H(+). Its function is as follows. Required for accurate and efficient protein synthesis under certain stress conditions. May act as a fidelity factor of the translation reaction, by catalyzing a one-codon backward translocation of tRNAs on improperly translocated ribosomes. Back-translocation proceeds from a post-translocation (POST) complex to a pre-translocation (PRE) complex, thus giving elongation factor G a second chance to translocate the tRNAs correctly. Binds to ribosomes in a GTP-dependent manner. The sequence is that of Elongation factor 4 from Leptospira interrogans serogroup Icterohaemorrhagiae serovar copenhageni (strain Fiocruz L1-130).